Consider the following 115-residue polypeptide: NADH-ubiquinone oxidoreductase chain 3 (115 aa).

3 helical membrane passes run 3 to 23, 56 to 76, and 84 to 104; these read LILM…IVAF, FFLV…LLPL, and PTLM…GLIY.

Belongs to the complex I subunit 3 family.

It localises to the mitochondrion membrane. The enzyme catalyses a ubiquinone + NADH + 5 H(+)(in) = a ubiquinol + NAD(+) + 4 H(+)(out). Functionally, core subunit of the mitochondrial membrane respiratory chain NADH dehydrogenase (Complex I) that is believed to belong to the minimal assembly required for catalysis. Complex I functions in the transfer of electrons from NADH to the respiratory chain. The immediate electron acceptor for the enzyme is believed to be ubiquinone. In Polypterus ornatipinnis (Ornate bichir), this protein is NADH-ubiquinone oxidoreductase chain 3 (MT-ND3).